Here is a 273-residue protein sequence, read N- to C-terminus: Cytochrome b-c1 complex subunit Rieske, mitochondrial (273 aa).

Residues 1–61 (MLRVAGRRLS…PFFVASRGFS (61 aa)) constitute a mitochondrion transit peptide. Positions 25-46 (PLAGAGVPDRDDDSARGRSQPR) are disordered. Residues 62 to 110 (STETVVPRNQDAGLADLPATVAAVKNPNPKVVYDEYNHERYPPGDPSKR) lie on the Mitochondrial matrix side of the membrane. A helical transmembrane segment spans residues 111-133 (AFAYFVLSGGRFIYASLLRLLVL). Topologically, residues 134 to 273 (KFVLSMSASK…FLEENKLLVG (140 aa)) are mitochondrial intermembrane. The Rieske domain occupies 176–271 (RRRTEDDIKL…YSFLEENKLL (96 aa)). Residues Cys-216, His-218, Cys-235, and His-238 each coordinate [2Fe-2S] cluster. Cys-221 and Cys-237 are disulfide-bonded.

It belongs to the Rieske iron-sulfur protein family. Component of the ubiquinol-cytochrome c oxidoreductase (cytochrome b-c1 complex, complex III, CIII), a multisubunit enzyme composed of 3 respiratory subunits cytochrome b, cytochrome c1 and Rieske protein, 2 core protein subunits, and several low-molecular weight protein subunits. The complex exists as an obligatory dimer and forms supercomplexes (SCs) in the inner mitochondrial membrane with cytochrome c oxidase (complex IV, CIV). The cofactor is [2Fe-2S] cluster.

The protein resides in the mitochondrion inner membrane. The enzyme catalyses a quinol + 2 Fe(III)-[cytochrome c](out) = a quinone + 2 Fe(II)-[cytochrome c](out) + 2 H(+)(out). Component of the ubiquinol-cytochrome c oxidoreductase, a multisubunit transmembrane complex that is part of the mitochondrial electron transport chain which drives oxidative phosphorylation. The respiratory chain contains 3 multisubunit complexes succinate dehydrogenase (complex II, CII), ubiquinol-cytochrome c oxidoreductase (cytochrome b-c1 complex, complex III, CIII) and cytochrome c oxidase (complex IV, CIV), that cooperate to transfer electrons derived from NADH and succinate to molecular oxygen, creating an electrochemical gradient over the inner membrane that drives transmembrane transport and the ATP synthase. The cytochrome b-c1 complex catalyzes electron transfer from ubiquinol to cytochrome c, linking this redox reaction to translocation of protons across the mitochondrial inner membrane, with protons being carried across the membrane as hydrogens on the quinol. In the process called Q cycle, 2 protons are consumed from the matrix, 4 protons are released into the intermembrane space and 2 electrons are passed to cytochrome c. The Rieske protein is a catalytic core subunit containing a [2Fe-2S] iron-sulfur cluster. It cycles between 2 conformational states during catalysis to transfer electrons from the quinol bound in the Q(0) site in cytochrome b to cytochrome c1. The chain is Cytochrome b-c1 complex subunit Rieske, mitochondrial from Zea mays (Maize).